The following is a 571-amino-acid chain: MEILSGAEMVVRSLIDQGIQHIFGYPGGAVLDIYDALKTVGGIEHILVRHEQAATHMADGYSRSTGKTGVVLVTSGPGATNAITGIATAYMDSIPMVVISGQVASSLIGYDAFQECDMIGISRPIVKHSFLVKKTEDIPIVFKKAFWLASSGRPGPIVIDLPKDILKKDNKYLYKWPDNINIRSYNPTTKGHIGQIKKALHTLLKAQRPVIYAGGGIISSNSSEELRIFAEKINCPVTTSLMGLGSFPGTHDQNISMLGMHGTYEANMTMHHADVIFAIGVRFDDRTTNNLNKYCPNAIVLHVDIDPTSISKTVSANIPIVGDAKHVLQKMIELLKKEKKISLLEDWWNTIKKWKKINSLQYNQLSNKIKPQTVIKTLFKLTKGTSYITSDVGQHQMFTALYYPFNKPRRWINSGGLGTMGFGLPAALGVKLALPKETVICITGDGSIQMNIQELSTARQYNLAVLILNLNNSSLGMVKQWQDMIYSGRHSHSYMDSLPDFVKLSESYGHFGIQITEPIELEEKLMLALSKLSDGHLVFVDVQIDNSEHVYPMQIQGGGMNEMRLRKKEVA.

E51 is a binding site for thiamine diphosphate. Residues R153, 261–282 (HGTY…IGVR), and 304–323 (DIDP…IVGD) contribute to the FAD site. The thiamine pyrophosphate binding stretch occupies residues 394-474 (QHQMFTALYY…VLILNLNNSS (81 aa)). 2 residues coordinate Mg(2+): D445 and N472.

It belongs to the TPP enzyme family. In terms of assembly, dimer of large and small chains. Mg(2+) is required as a cofactor. The cofactor is thiamine diphosphate.

It catalyses the reaction 2 pyruvate + H(+) = (2S)-2-acetolactate + CO2. It participates in amino-acid biosynthesis; L-isoleucine biosynthesis; L-isoleucine from 2-oxobutanoate: step 1/4. The protein operates within amino-acid biosynthesis; L-valine biosynthesis; L-valine from pyruvate: step 1/4. The sequence is that of Acetolactate synthase large subunit (ilvI) from Buchnera aphidicola subsp. Acyrthosiphon pisum (strain APS) (Acyrthosiphon pisum symbiotic bacterium).